The following is a 559-amino-acid chain: Acetylcholinesterase-1 (559 aa).

The N-terminal stretch at 1–21 (MMLPRCFVTVLLMSSVLYIGG) is a signal peptide. Cysteines 92 and 114 form a disulfide. 142–143 (GG) contributes to the substrate binding site. Ser223 acts as the Acyl-ester intermediate in catalysis. Ser223 is modified (phosphoserine). Cys276 and Cys293 are oxidised to a cystine. Asn278 and Asn342 each carry an N-linked (GlcNAc...) asparagine glycan. Glu354 serves as the catalytic Charge relay system. Asn374 carries an N-linked (GlcNAc...) asparagine glycan. A disulfide bridge connects residues Cys432 and Cys550. The active-site Charge relay system is His471.

Belongs to the type-B carboxylesterase/lipase family. In terms of tissue distribution, expressed by the venom gland.

It is found in the secreted. It catalyses the reaction acetylcholine + H2O = choline + acetate + H(+). Terminates signal transduction at the neuromuscular junction by rapid hydrolysis of the acetylcholine released into the synaptic cleft. The polypeptide is Acetylcholinesterase-1 (Trittame loki (Brush-footed trapdoor spider)).